Consider the following 302-residue polypeptide: Putative cyclin-D6-1 (302 aa).

The protein belongs to the cyclin family. Cyclin D subfamily.

This Arabidopsis thaliana (Mouse-ear cress) protein is Putative cyclin-D6-1 (CYCD6-1).